The chain runs to 206 residues: Dephospho-CoA kinase (206 aa).

Positions 4 to 204 constitute a DPCK domain; that stretch reads VIGLTGGIAS…EGYIESHSED (201 aa). Position 12-17 (12-17) interacts with ATP; that stretch reads ASGKST.

The protein belongs to the CoaE family.

It localises to the cytoplasm. It catalyses the reaction 3'-dephospho-CoA + ATP = ADP + CoA + H(+). It participates in cofactor biosynthesis; coenzyme A biosynthesis; CoA from (R)-pantothenate: step 5/5. Catalyzes the phosphorylation of the 3'-hydroxyl group of dephosphocoenzyme A to form coenzyme A. This Staphylococcus saprophyticus subsp. saprophyticus (strain ATCC 15305 / DSM 20229 / NCIMB 8711 / NCTC 7292 / S-41) protein is Dephospho-CoA kinase.